Reading from the N-terminus, the 941-residue chain is Bifunctional uridylyltransferase/uridylyl-removing enzyme (941 aa).

Residues 1 to 372 are uridylyltransferase; sequence MAKHDLSDAT…RFAHRPRRIP (372 aa). The tract at residues 373-728 is uridylyl-removing; it reads GTPEFIEDRG…VRTHSFHAIT (356 aa). Residues 489 to 611 form the HD domain; that stretch reads VDEHLIRSVG…VQSLDRLRML (123 aa). 2 consecutive ACT domains span residues 729-810 and 840-919; these read EITV…EVIA and VIEI…LREQ. A disordered region spans residues 916–941; it reads LREQMPSGIIAPAATKSPAAEKKARV.

This sequence belongs to the GlnD family. Mg(2+) is required as a cofactor.

The catalysed reaction is [protein-PII]-L-tyrosine + UTP = [protein-PII]-uridylyl-L-tyrosine + diphosphate. The enzyme catalyses [protein-PII]-uridylyl-L-tyrosine + H2O = [protein-PII]-L-tyrosine + UMP + H(+). Uridylyltransferase (UTase) activity is inhibited by glutamine, while glutamine activates uridylyl-removing (UR) activity. In terms of biological role, modifies, by uridylylation and deuridylylation, the PII regulatory proteins (GlnB and homologs), in response to the nitrogen status of the cell that GlnD senses through the glutamine level. Under low glutamine levels, catalyzes the conversion of the PII proteins and UTP to PII-UMP and PPi, while under higher glutamine levels, GlnD hydrolyzes PII-UMP to PII and UMP (deuridylylation). Thus, controls uridylylation state and activity of the PII proteins, and plays an important role in the regulation of nitrogen assimilation and metabolism. This is Bifunctional uridylyltransferase/uridylyl-removing enzyme from Allorhizobium ampelinum (strain ATCC BAA-846 / DSM 112012 / S4) (Agrobacterium vitis (strain S4)).